Here is a 187-residue protein sequence, read N- to C-terminus: Probable GTP-binding protein EngB (187 aa).

Residues 18–187 enclose the EngB-type G domain; the sequence is KNSEIAFWGR…KLKENINSNF (170 aa). GTP is bound by residues 26-33, 52-56, 70-73, 137-140, and 168-170; these read GRSNVGKS, GRTQL, DLPG, TKID, and VSS. Mg(2+) is bound by residues S33 and T54.

The protein belongs to the TRAFAC class TrmE-Era-EngA-EngB-Septin-like GTPase superfamily. EngB GTPase family. Mg(2+) serves as cofactor.

In terms of biological role, necessary for normal cell division and for the maintenance of normal septation. The protein is Probable GTP-binding protein EngB of Mycoplasmopsis synoviae (strain 53) (Mycoplasma synoviae).